A 461-amino-acid polypeptide reads, in one-letter code: GTPase Der (461 aa).

EngA-type G domains follow at residues 2-164 and 197-368; these read QKII…EDDV and IRVG…KNFT. GTP is bound by residues 8–15, 55–59, 116–119, 203–210, 250–254, and 314–317; these read GKPNVGKS, DSGGL, NKID, GRVNVGKS, DTAGI, and NKWD. One can recognise a KH-like domain in the interval 369 to 453; sequence QKIQTSKLNE…PIVLAPKKRG (85 aa).

Belongs to the TRAFAC class TrmE-Era-EngA-EngB-Septin-like GTPase superfamily. EngA (Der) GTPase family. As to quaternary structure, associates with the 50S ribosomal subunit.

GTPase that plays an essential role in the late steps of ribosome biogenesis. This is GTPase Der from Campylobacter curvus (strain 525.92).